A 398-amino-acid polypeptide reads, in one-letter code: Cytochrome b561 and DOMON domain-containing protein At3g61750 (398 aa).

Residues 1 to 23 (MKTLVGFYILCFLIGQDLPFLAA) form the signal peptide. In terms of domain architecture, DOMON spans 64–177 (NTFVLRYSEN…PRRAVILAFS (114 aa)). Residues 184-377 (LGRLTKHDDK…LEIFRIRGTI (194 aa)) form the Cytochrome b561 domain. Position 220 (His-220) interacts with heme b. The next 2 membrane-spanning stretches (helical) occupy residues 222 to 242 (VMAI…ARYL) and 252 to 272 (LHIG…ILGI). His-253 and His-285 together coordinate heme b. 3 helical membrane passes run 287–307 (GIGI…FARP), 320–340 (YHHW…VLGI), and 351–371 (KIGY…LEIF). His-321 contributes to the heme b binding site.

Heme b serves as cofactor.

Its subcellular location is the membrane. In terms of biological role, may act as a catecholamine-responsive trans-membrane electron transporter. The chain is Cytochrome b561 and DOMON domain-containing protein At3g61750 from Arabidopsis thaliana (Mouse-ear cress).